Consider the following 331-residue polypeptide: High-affinity nickel-transport protein NixA (331 aa).

7 helical membrane passes run 3–23 (LWFP…ALLF), 77–97 (MGHS…IAWA), 110–130 (VVGT…NAII), 184–204 (PVGF…LLAL), 213–233 (VVGM…FDTL), 259–279 (ITAL…FQVI), and 302–322 (DLGY…FFLW).

The protein belongs to the NiCoT transporter (TC 2.A.52) family.

The protein localises to the cell inner membrane. In terms of biological role, high-affinity nickel intake protein. Imports nickel ions in an energy-dependent fashion. Necessary for the expression of catalytically active urease. This chain is High-affinity nickel-transport protein NixA (nixA), found in Helicobacter pylori (strain J99 / ATCC 700824) (Campylobacter pylori J99).